A 413-amino-acid polypeptide reads, in one-letter code: Ras association domain-containing protein 5 (413 aa).

The tract at residues 1–103 (MASPAIGQRP…RPRDVRSIFE (103 aa)) is disordered. Residues 52–74 (SEDRGGRRSGRRDPEPTPRDCRH) are compositionally biased toward basic and acidic residues. The Phorbol-ester/DAG-type zinc-finger motif lies at 117 to 165 (GHRFVELALRGGPGWCDLCGREVLRQALRCANCKFTCHSECRSLIQLDC). 2 positions are modified to phosphoserine: S177 and S274. Positions 265 to 359 (PAATTDKRTS…LSFVLKENET (95 aa)) constitute a Ras-associating domain. Phosphothreonine is present on T347. Residues 361 to 408 (EVEWDAFSIPELQNFLTILEKEEQDKIHQLQKKYNKFRQKLEEALRES) form the SARAH domain.

Interacts directly with activated HRAS; a RASSF5-STK4/MST1 complex probably associates with activated HRAS. Interacts with KRAS. Probably interacts with Ras-like GTPases RRAS, MRAS, RAP1B, RAP2A and RALA. Interacts with RRAS2. Can self-associate. Interacts with RSSF1 isoform A. The RSSF1 isoform A-RSSF5 heterodimer probably mediates the association of RSSF1 with HRAS. Isoform 2 interacts with activated RAP1A and ITGAL/LFA-1. Binds STK4/MST1, inhibiting STK4/MST1 autoactivation.

The protein localises to the cytoplasm. The protein resides in the cytoskeleton. In terms of biological role, potential tumor suppressor. Seems to be involved in lymphocyte adhesion by linking RAP1A activation upon T-cell receptor or chemokine stimulation to integrin activation. Isoform 2 stimulates lymphocyte polarization and the patch-like distribution of ITGAL/LFA-1, resulting in an enhanced adhesion to ICAM1. Together with RAP1A may participate in regulation of microtubule growth. The association of isoform 2 with activated RAP1A is required for directional movement of endothelial cells during wound healing. May be involved in regulation of Ras apoptotic function. The RASSF5-STK4/MST1 complex may mediate HRAS and KRAS induced apoptosis. This chain is Ras association domain-containing protein 5 (Rassf5), found in Mus musculus (Mouse).